The chain runs to 541 residues: Forkhead box protein O (541 aa).

Positions 118–150 (NEQCGQLGGASSNGSTAMLHTPDGSNSHQTSFP) are enriched in polar residues. Disordered regions lie at residues 118-168 (NEQC…GKKT) and 252-291 (WVINPDAKPGRNPRRTRERSNTIETTTKAQLEKSRRGAKK). The fork-head DNA-binding region spans 175–268 (WGNMSYAELI…KPGRNPRRTR (94 aa)). T273 is subject to Phosphothreonine. S319 is subject to Phosphoserine; by CaMK2.

Interacts with rle-1. Interacts with unc-43 and tax-6. Interacts with jnk-1. Interacts with ftt-2. Interacts with prmt-1. Interacts with hcf-1. Post-translationally, phosphorylated by akt-1 and/or akt-2. Phosphorylated by sgk-1. Phosphorylated by unc-43. Phosphorylated by jnk-1. Dephosphorylated by tax-6 in vitro. Ubiquitinated. Ubiquitination by rle-1 leads to proteasome-mediated degradation. In terms of processing, methylation by prmt-1 prevents phosphorylation and promotes translocation to the nucleus to allow for daf-16-dependent transcription. In terms of tissue distribution, isoform b and isoform c are expressed in ectoderm, muscles, intestine and neurons. Isoform b is also expressed in the pharynx. The intestine appears to be the primary site of longevity function.

The protein resides in the nucleus. Its subcellular location is the cytoplasm. Forkhead-type transcription factor. Binds to the promoters of genes that contain the daf-16/FOXO binding element (DBE), TTGTTTAC, in their regulatory region. Functions in the Insulin/IGF-1-like signaling (IIS) mediated pathway which affects lipogenesis, lifespan, starvation survival, heat shock and oxidative stress responses, sleep, associative memory, and dauer formation. Longevity signaling predominantly arises from expression in the intestine. Acts in the intestine to mediate the role of slo-1 in age-associated decline in motor activity and longevity. Transcriptional activity of daf-16/FOXO is negatively regulated by interaction with host cell factor homolog hcf-1; and by cytoplasmic sequestration by association with ftt-2. Inhibition is required for the carbon dioxide (CO2) avoidance response. Upon loss of inhibition, daf-16 translocates to the nucleus to regulate genes that result in delayed reproduction and growth while increasing stress resistance starvation tolerance and longevity. Association with arginine methyltransferase prmt-1 prevents phosphorylation and allows for translocation to the nucleus and the subsequent transcription of longevity-related genes. Modulation of its activity by cGMP levels in sensory neurons regulates lifespan. Has a protective role against muscle dystrophy. Involved in mediating protection against aberrant protein aggregation proteotoxicity. Influences transcription of genes that code for proteins involved in immunity as part of a general stress response. Targets genes that inhibit and stimulate tumor growth. Targets kinases, phosphatases and transcription factors that are primarily involved in signaling and gene regulation. Thought to regulate ins-7 in FOXO-to-FOXO signaling, which coordinates daf-16 expression. Activity is positively regulated by shc-1-mediated inhibition of daf-2 and activation of JNK pathway. Through the regulation of its activity by shc-1-mediated inhibition of daf-2 and activation of JNK pathway, plays a role in maintaining the integrity of the gonad. Functions by indirect interaction with jnk-1 of the mitogen-activated protein kinase (MAPK) pathway. Involved in increased proteasome activity by activating expression of rpn-6.1 in response to proteotoxic stress, leading to enhanced assembly of the 26S proteasome, followed by higher proteasome activity. Also regulates proteasome activity in the intestine by preventing expression of deubiquitinase ubh-4. Represses transcription of natc-1. Involved in regulation of srh-234 expression. Binds to the promoter of the AMPK-gamma regulatory subunit, aakg-4, and activates its transcription. Also activates transcription of AMPK-gamma regulatory subunit, aakg-1. Maintains endoplasmic reticulum (ER) function by inducing protein degradation and elimination to remove misfolded secretory proteins from the ER independently of the ire-1/xbp-1 unfolded protein response pathway. Regulates epidermal innate immunity to nematophagous fungal infection and physical wounding which trigger bli-3 induced ROS release, leading to daf-16 activation independently of daf-2 signaling. May negatively regulate resistance to stress caused by oxidized cholesterol adducts by preventing the activation of daf-9 and nuclear hormone receptor daf-12, two members of the steroid signaling pathway. Promotes apoptosis during embryonic development. Probably through the regulation of the autophagy genes atg-18 and atg-16.2, plays a role in regulating stem cell number in the germline during larval development. Plays a role in learning and memory; including associative memory, and aversive gustatory associated learning known as salt avoidance learning. Plays a role in regulating gene transcription in response to white light exposure. Binds to the promoter of dex-1 to positively regulate its expression in seam cells during the dauer phase. Plays a role in transgenerational lipid accumulation in response to a high-fat diet. Its function is as follows. Functions in the Insulin/IGF-1-like signaling (IIS) mediated pathway. May play a role in lifespan modulation, but less significant than that played by isoforms d and f. Functionally, functions in the Insulin/IGF-1-like signaling (IIS) mediated pathway. Transcript level in the early adult may play a role in lifespan modulation, but effect is more significant than that played by isoform a. The chain is Forkhead box protein O from Caenorhabditis elegans.